Reading from the N-terminus, the 337-residue chain is METMRAQRLQPGVGTSGRGTLRALRPGVTGAAAATATPPAGPPPAPPPPAPPPPPLLLSGAPGLPLPPGAAGSPAVLREAVEAVVRSFAKHTQGYGRVNVVEALQEFWQMKQSRGADLKNGALVVYEMVPSNSPPYVCYVTLPGGSCFGSFQFCPTKAEARRSAAKIALMNSVFNEHPSRRITDEFIEKSVSEALASFNGNREEADNPNTGIGAFRFMLESNKGKSMLEFQELMTVFQLLHWNGSLKAMRERQCSRQEVLAHYSHRALDDDIRHQMALDWVSREQSVPGALSRELASTERELDEARLAGKELRFHKEKKDILVLAAGQLGNMHSSNC.

Positions 1 to 64 are disordered; the sequence is METMRAQRLQ…PLLLSGAPGL (64 aa). Residues 26 to 38 are compositionally biased toward low complexity; that stretch reads PGVTGAAAATATP. The span at 39-56 shows a compositional bias: pro residues; sequence PAGPPPAPPPPAPPPPPL.

Belongs to the LIX1 family.

This Homo sapiens (Human) protein is LIX1-like protein (LIX1L).